Here is a 707-residue protein sequence, read N- to C-terminus: Integrator complex subunit 13 (707 aa).

Residues 565-625 (PPEEEERKKR…AEAEVIKDSP (61 aa)) show a composition bias toward basic and acidic residues. Residues 565–651 (PPEEEERKKR…TGPAEKSKGP (87 aa)) are disordered. Residues 567–622 (EEEERKKRGRKREDKEEKAEKPPKENEHEKKWQESERVKSVLDREKEDLAEAEVIK) are a coiled coil. The Nuclear localization signal (NLS) signature appears at 573–583 (KRGRKREDKEE). Residues 650-695 (GPMSLLSLWSSRINTANSRKHQEFVGRLNSVNNKAELYQHLKEENG) are cleavage module binding motif (CMBM).

The protein belongs to the Integrator subunit 13 family. As to quaternary structure, component of the Integrator complex, composed of core subunits INTS1, INTS2, INTS3, INTS4, INTS5, INTS6, INTS7, INTS8, INTS9/RC74, INTS10, INTS11/CPSF3L, INTS12, INTS13, INTS14 and INTS15. The core complex associates with protein phosphatase 2A subunits PPP2CA and PPP2R1A, to form the Integrator-PP2A (INTAC) complex. INTS13 is part of the tail subcomplex, composed of INTS10, INTS13, INTS14 and INTS15.

The protein localises to the nucleus. It is found in the cytoplasm. Component of the integrator complex, a multiprotein complex that terminates RNA polymerase II (Pol II) transcription in the promoter-proximal region of genes. The integrator complex provides a quality checkpoint during transcription elongation by driving premature transcription termination of transcripts that are unfavorably configured for transcriptional elongation: the complex terminates transcription by (1) catalyzing dephosphorylation of the C-terminal domain (CTD) of Pol II subunit POLR2A/RPB1 and SUPT5H/SPT5, (2) degrading the exiting nascent RNA transcript via endonuclease activity and (3) promoting the release of Pol II from bound DNA. The integrator complex is also involved in terminating the synthesis of non-coding Pol II transcripts, such as enhancer RNAs (eRNAs), small nuclear RNAs (snRNAs), telomerase RNAs and long non-coding RNAs (lncRNAs). Within the integrator complex, INTS13 is part of the integrator tail module and acts as a platform for the recruitment of transcription factors at promoters. This Xenopus tropicalis (Western clawed frog) protein is Integrator complex subunit 13.